A 380-amino-acid chain; its full sequence is Cytochrome b (380 aa).

4 consecutive transmembrane segments (helical) span residues 34 to 54 (FGSL…LLAA), 78 to 99 (WLIR…YLHI), 114 to 134 (WNTG…GYVL), and 179 to 199 (FFAL…IHLT). 2 residues coordinate heme b: His-84 and His-98. Residues His-183 and His-197 each coordinate heme b. His-202 lines the a ubiquinone pocket. A run of 4 helical transmembrane segments spans residues 227–247 (LKDI…ALFS), 289–309 (LGGV…PFLH), 321–341 (LSQL…WVGS), and 348–368 (FIII…VLFP).

It belongs to the cytochrome b family. In terms of assembly, the cytochrome bc1 complex contains 11 subunits: 3 respiratory subunits (MT-CYB, CYC1 and UQCRFS1), 2 core proteins (UQCRC1 and UQCRC2) and 6 low-molecular weight proteins (UQCRH/QCR6, UQCRB/QCR7, UQCRQ/QCR8, UQCR10/QCR9, UQCR11/QCR10 and a cleavage product of UQCRFS1). This cytochrome bc1 complex then forms a dimer. The cofactor is heme b.

It localises to the mitochondrion inner membrane. In terms of biological role, component of the ubiquinol-cytochrome c reductase complex (complex III or cytochrome b-c1 complex) that is part of the mitochondrial respiratory chain. The b-c1 complex mediates electron transfer from ubiquinol to cytochrome c. Contributes to the generation of a proton gradient across the mitochondrial membrane that is then used for ATP synthesis. The polypeptide is Cytochrome b (MT-CYB) (Pharomachrus antisianus (Crested quetzal)).